Consider the following 585-residue polypeptide: Glycerol-3-phosphate dehydrogenase (585 aa).

An FAD-binding site is contributed by 37–65 (DVVVIGGGVVGSGCALDAATRGLKVALVE).

This sequence belongs to the FAD-dependent glycerol-3-phosphate dehydrogenase family. FAD serves as cofactor.

It is found in the cytoplasm. It catalyses the reaction a quinone + sn-glycerol 3-phosphate = dihydroxyacetone phosphate + a quinol. The protein is Glycerol-3-phosphate dehydrogenase (glpD) of Mycobacterium leprae (strain TN).